The sequence spans 308 residues: Acetylglutamate kinase (308 aa).

Residues 86–87 (GG), arginine 108, and asparagine 201 contribute to the substrate site.

This sequence belongs to the acetylglutamate kinase family. ArgB subfamily.

The protein localises to the cytoplasm. It carries out the reaction N-acetyl-L-glutamate + ATP = N-acetyl-L-glutamyl 5-phosphate + ADP. The protein operates within amino-acid biosynthesis; L-arginine biosynthesis; N(2)-acetyl-L-ornithine from L-glutamate: step 2/4. Catalyzes the ATP-dependent phosphorylation of N-acetyl-L-glutamate. The chain is Acetylglutamate kinase from Prochlorococcus marinus (strain MIT 9313).